Reading from the N-terminus, the 292-residue chain is 4-hydroxy-tetrahydrodipicolinate synthase (292 aa).

Threonine 45 provides a ligand contact to pyruvate. The active-site Proton donor/acceptor is the tyrosine 133. Residue lysine 161 is the Schiff-base intermediate with substrate of the active site. Isoleucine 203 is a binding site for pyruvate.

This sequence belongs to the DapA family. Homodimer.

It is found in the cytoplasm. It carries out the reaction L-aspartate 4-semialdehyde + pyruvate = (2S,4S)-4-hydroxy-2,3,4,5-tetrahydrodipicolinate + H2O + H(+). It participates in amino-acid biosynthesis; L-lysine biosynthesis via DAP pathway; (S)-tetrahydrodipicolinate from L-aspartate: step 3/4. Its function is as follows. Catalyzes the condensation of (S)-aspartate-beta-semialdehyde [(S)-ASA] and pyruvate to 4-hydroxy-tetrahydrodipicolinate (HTPA). In Pseudomonas syringae pv. syringae (strain B728a), this protein is 4-hydroxy-tetrahydrodipicolinate synthase.